We begin with the raw amino-acid sequence, 55 residues long: UPF0391 membrane protein NE1120 (55 aa).

2 helical membrane passes run 4–24 (MALV…AGIA) and 27–47 (LAWA…VFYL).

The protein belongs to the UPF0391 family.

It localises to the cell membrane. This chain is UPF0391 membrane protein NE1120, found in Nitrosomonas europaea (strain ATCC 19718 / CIP 103999 / KCTC 2705 / NBRC 14298).